A 710-amino-acid polypeptide reads, in one-letter code: mRNA export factor crp79 (710 aa).

RRM domains lie at 19-102 and 222-292; these read IYVG…KLTI and HFKQ…PTTP. The segment covering 333–348 has biased composition (polar residues); sequence QWGSVSTTGVSNQQNH. Residues 333–357 are disordered; it reads QWGSVSTTGVSNQQNHPAAWNPDNK. In terms of domain architecture, RRM 3 spans 401 to 474; that stretch reads EDLFSPFGSI…DRIRRLQAFF (74 aa). Residues 502 to 524 show a composition bias toward polar residues; it reads TIRKPIESSTNKISENPTTLSSK. The interval 502-544 is disordered; that stretch reads TIRKPIESSTNKISENPTTLSSKVENKNEPKTGENKEPSQTNE. Residues 525–538 are compositionally biased toward basic and acidic residues; sequence VENKNEPKTGENKE.

Its subcellular location is the cytoplasm. It localises to the nucleus. Its function is as follows. Binds the poly(A) tail of mRNA. Involved in the export of mRNA from the nucleus to the cytoplasm. This chain is mRNA export factor crp79 (crp79), found in Schizosaccharomyces pombe (strain 972 / ATCC 24843) (Fission yeast).